A 258-amino-acid polypeptide reads, in one-letter code: UPF0246 protein YaaA (258 aa).

This sequence belongs to the UPF0246 family.

This is UPF0246 protein YaaA from Escherichia coli O7:K1 (strain IAI39 / ExPEC).